The chain runs to 436 residues: ATP-dependent protease ATPase subunit HslU (436 aa).

ATP contacts are provided by residues valine 18, glycine 60–glutamate 65, aspartate 249, glutamate 314, and arginine 386.

The protein belongs to the ClpX chaperone family. HslU subfamily. As to quaternary structure, a double ring-shaped homohexamer of HslV is capped on each side by a ring-shaped HslU homohexamer. The assembly of the HslU/HslV complex is dependent on binding of ATP.

The protein resides in the cytoplasm. ATPase subunit of a proteasome-like degradation complex; this subunit has chaperone activity. The binding of ATP and its subsequent hydrolysis by HslU are essential for unfolding of protein substrates subsequently hydrolyzed by HslV. HslU recognizes the N-terminal part of its protein substrates and unfolds these before they are guided to HslV for hydrolysis. In Rhizobium rhizogenes (strain K84 / ATCC BAA-868) (Agrobacterium radiobacter), this protein is ATP-dependent protease ATPase subunit HslU.